A 513-amino-acid polypeptide reads, in one-letter code: MGAAAKLAFAVFLISCSSGAILGRSETQECLFFNANWEKDRTNQTGVEPCYGDKDKRRHCFATWKNISGSIEIVKQGCWLDDINCYDRTDCVEKKDSPEVYFCCCEGNMCNEKFSYFPEMEVTQPTSNPVTPKPPYYNILLYSLVPLMLIAGIVICAFWVYRHHKMAYPPVLVPTQDPGPPPPSPLLGLKPLQLLEVKARGRFGCVWKAQLLNEYVAVKIFPIQDKQSWQNEYEVYSLPGMKHENILQFIGAEKRGTSVDVDLWLITAFHEKGSLSDFLKANVVSWNELCHIAETMARGLAYLHEDIPGLKDGHKPAISHRDIKSKNVLLKNNLTACIADFGLALKFEAGKSAGDTHGQVGTRRYMAPEVLEGAINFQRDAFLRIDMYAMGLVLWELASRCTAADGPVDEYMLPFEEEIGQHPSLEDMQEVVVHKKKRPVLRDYWQKHAGMAMLCETIEECWDHDAEARLSAGCVGERITQMQRLTNIITTEDIVTVVTMVTNVDFPPKESSL.

The first 19 residues, 1-19, serve as a signal peptide directing secretion; sequence MGAAAKLAFAVFLISCSSG. Over 20–135 the chain is Extracellular; the sequence is AILGRSETQE…TSNPVTPKPP (116 aa). 5 disulfides stabilise this stretch: C30/C60, C50/C78, C85/C104, C91/C103, and C105/C110. N43 and N66 each carry an N-linked (GlcNAc...) asparagine glycan. A helical membrane pass occupies residues 136-161; the sequence is YYNILLYSLVPLMLIAGIVICAFWVY. At 162-513 the chain is on the cytoplasmic side; that stretch reads RHHKMAYPPV…VDFPPKESSL (352 aa). The Protein kinase domain maps to 192–485; it reads LQLLEVKARG…GERITQMQRL (294 aa). ATP-binding positions include 198–206 and K219; that span reads KARGRFGCV. D322 (proton acceptor) is an active-site residue.

It belongs to the protein kinase superfamily. TKL Ser/Thr protein kinase family. TGFB receptor subfamily. As to quaternary structure, part of a complex consisting of MAGI2/ARIP1, ACVR2A, ACVR1B and SMAD3. Interacts with MAGI2/ARIP1. Interacts with type I receptor ACVR1. Interacts with BMP7. Interacts with TSC22D1/TSC-22. Interacts with activin A/INHBA. Mg(2+) is required as a cofactor. The cofactor is Mn(2+).

It localises to the cell membrane. It catalyses the reaction L-threonyl-[receptor-protein] + ATP = O-phospho-L-threonyl-[receptor-protein] + ADP + H(+). It carries out the reaction L-seryl-[receptor-protein] + ATP = O-phospho-L-seryl-[receptor-protein] + ADP + H(+). Functionally, on ligand binding, forms a receptor complex consisting of two type II and two type I transmembrane serine/threonine kinases. Type II receptors phosphorylate and activate type I receptors which autophosphorylate, then bind and activate SMAD transcriptional regulators. Receptor for activin A, activin B and inhibin A. Mediates induction of adipogenesis by GDF6. The chain is Activin receptor type-2A from Homo sapiens (Human).